The chain runs to 557 residues: 2-succinyl-5-enolpyruvyl-6-hydroxy-3-cyclohexene-1-carboxylate synthase (557 aa).

Belongs to the TPP enzyme family. MenD subfamily. In terms of assembly, homodimer. Mg(2+) serves as cofactor. Requires Mn(2+) as cofactor. Thiamine diphosphate is required as a cofactor.

It catalyses the reaction isochorismate + 2-oxoglutarate + H(+) = 5-enolpyruvoyl-6-hydroxy-2-succinyl-cyclohex-3-ene-1-carboxylate + CO2. It participates in quinol/quinone metabolism; 1,4-dihydroxy-2-naphthoate biosynthesis; 1,4-dihydroxy-2-naphthoate from chorismate: step 2/7. The protein operates within quinol/quinone metabolism; menaquinone biosynthesis. In terms of biological role, catalyzes the thiamine diphosphate-dependent decarboxylation of 2-oxoglutarate and the subsequent addition of the resulting succinic semialdehyde-thiamine pyrophosphate anion to isochorismate to yield 2-succinyl-5-enolpyruvyl-6-hydroxy-3-cyclohexene-1-carboxylate (SEPHCHC). The chain is 2-succinyl-5-enolpyruvyl-6-hydroxy-3-cyclohexene-1-carboxylate synthase from Phocaeicola vulgatus (strain ATCC 8482 / DSM 1447 / JCM 5826 / CCUG 4940 / NBRC 14291 / NCTC 11154) (Bacteroides vulgatus).